The sequence spans 151 residues: MITFTPTRNIDLIEMVGNHPDIIAGSNNGDGYDYKPECRYFEVNVHGQFGGIVYYNEIQPMTFDCHAMYLPEIRGFSKEIGLAFWRYILTNTTVQCVTSFAARKFADGQMYCAMIGLKRVGTIKKYFKGVDDVTFYAATREELTELLNNGR.

In Salmonella phage P22 (Bacteriophage P22), this protein is Protein gp14 (14).